A 466-amino-acid polypeptide reads, in one-letter code: tRNA dimethylallyltransferase 2 (466 aa).

Glycine 27–serine 34 lines the ATP pocket. Threonine 29 to serine 34 lines the substrate pocket. Residues aspartate 52–glutamine 55 form an interaction with substrate tRNA region. The segment at tryptophan 433 to asparagine 466 is disordered. A compositionally biased stretch (basic residues) spans lysine 437 to asparagine 451. Residues lysine 456–asparagine 466 are compositionally biased toward basic and acidic residues.

This sequence belongs to the IPP transferase family. The cofactor is Mg(2+). Expressed ubiquitously, with highest expression in proliferating tissues.

The protein localises to the cytoplasm. The enzyme catalyses adenosine(37) in tRNA + dimethylallyl diphosphate = N(6)-dimethylallyladenosine(37) in tRNA + diphosphate. Its function is as follows. Catalyzes the transfer of a dimethylallyl group onto the adenine at position 37 in tRNAs that read codons beginning with uridine, leading to the formation of N6-(dimethylallyl)adenosine (i(6)A). Involved in the cis-type cytokinin biosynthesis. The sequence is that of tRNA dimethylallyltransferase 2 (IPT2) from Arabidopsis thaliana (Mouse-ear cress).